We begin with the raw amino-acid sequence, 1133 residues long: MLRTRTTKTLSTVARTTRAIQYYRSIAKTAAVSQRRFASTLTVRDVENIKPSHIIKSPTWQEFQHQLKDPRYMEHFAQLDAQFARHFMATNSGKSILAKDDSTSQKKDEDVKIVPDEKDTDNDVEPTRDDEIVNKDQEGEASKNSRSSASGGGQSSSSRSDSGDGSSKQKPPKDVPEVYPQMLALPIARRPLFPGFYKAVVISDERVMKAIKEMLDRQQPYIGAFMLKNSEEDTDVITDKNDVYDVGVLAQITSAFPSKDEKTGTETMTALLYPHRRIKIDELFPPNEEKEKSKEQAKDTDTETTVVEDANNPEDQESTSPATPKLEDIVVERIPDSELQHHKRVEATEEESEELDDIQEGEDINPTEFLKNYNVSLVNVLNLEDEPFDRKSPVINALTSEILKVFKEISQLNTMFREQIATFSASIQSATTNIFEEPARLADFAAAVSAGEEDELQDILSSLNIEHRLEKSLLVLKKELMNAELQNKISKDVETKIQKRQREYYLMEQLKGIKRELGIDDGRDKLIDTYKERIKSLKLPDSVQKIFDDEITKLSTLETSMSEFGVIRNYLDWLTSIPWGKHSKEQYSIPRAKKILDEDHYGMVDVKDRILEFIAVGKLLGKVDGKIICFVGPPGVGKTSIGKSIARALNRKFFRFSVGGMTDVAEIKGHRRTYIGALPGRVVQALKKCQTQNPLILIDEIDKIGHGGIHGDPSAALLEVLDPEQNNSFLDNYLDIPIDLSKVLFVCTANSLETIPRPLLDRMEVIELTGYVAEDKVKIAEQYLVPSAKKSAGLENSHVDMTEDAITALMKYYCRESGVRNLKKHIEKIYRKAALQVVKKLSIEDSPTSSADSKPKESVSSEEKAENNAKSSSEKTKDNNSEKTSDDIEALKTSEKINVSISQKNLKDYVGPPVYTTDRLYETTPPGVVMGLAWTNMGGCSLYVESVLEQPLHNCKHPTFERTGQLGDVMKESSRLAYSFAKMYLAQKFPENRFFEKASIHLHCPEGATPKDGPSAGVTMATSFLSLALNKSIDPTVAMTGELTLTGKVLRIGGLREKAVAAKRSGAKTIIFPKDNLNDWEELPDNVKEGLEPLAADWYNDIFQKLFKDVNTKEGNSVWKAEFEILDAKKEKD.

Residues 1 to 37 (MLRTRTTKTLSTVARTTRAIQYYRSIAKTAAVSQRRF) constitute a mitochondrion transit peptide. The propeptide at 38–98 (ASTLTVRDVE…ATNSGKSILA (61 aa)) is removed in mature form; by autocatalysis. Composition is skewed to basic and acidic residues over residues 98 to 117 (AKDD…VPDE) and 125 to 143 (EPTR…EASK). Disordered regions lie at residues 98–176 (AKDD…KDVP) and 282–358 (ELFP…LDDI). The span at 145-166 (SRSSASGGGQSSSSRSDSGDGS) shows a compositional bias: low complexity. Residues 182–480 (MLALPIARRP…KSLLVLKKEL (299 aa)) form the Lon N-terminal domain. Composition is skewed to basic and acidic residues over residues 282-301 (ELFP…KDTD) and 325-340 (KLED…SELQ). Acidic residues predominate over residues 348–358 (TEEESEELDDI). 632–639 (GPPGVGKT) provides a ligand contact to ATP. The dispensable for catalytic activity stretch occupies residues 839-892 (KKLSIEDSPTSSADSKPKESVSSEEKAENNAKSSSEKTKDNNSEKTSDDIEALK). The disordered stretch occupies residues 844–889 (EDSPTSSADSKPKESVSSEEKAENNAKSSSEKTKDNNSEKTSDDIE). The span at 853–889 (SKPKESVSSEEKAENNAKSSSEKTKDNNSEKTSDDIE) shows a compositional bias: basic and acidic residues. Residues 923-1109 (TTPPGVVMGL…NDIFQKLFKD (187 aa)) enclose the Lon proteolytic domain. Catalysis depends on residues Ser-1015 and Lys-1058.

The protein belongs to the peptidase S16 family. As to quaternary structure, homohexamer. Organized in a ring with a central cavity. The ATP-binding and proteolytic domains (AP-domain) form a hexameric chamber. Oligomerization is independent of its proteolytic activity and the autocatalytic maturation of its subunits.

It is found in the mitochondrion matrix. The enzyme catalyses Hydrolysis of proteins in presence of ATP.. In terms of biological role, ATP-dependent serine protease that mediates the selective degradation of misfolded, unassembled or oxidatively damaged polypeptides as well as certain short-lived regulatory proteins in the mitochondrial matrix. May also have a chaperone function in the assembly of inner membrane protein complexes. Participates in the regulation of mitochondrial gene expression and in the maintenance of the integrity of the mitochondrial genome. Binds to mitochondrial DNA in a site-specific manner. Endogenous substrates include ABF2, ACO2, ILV1, ILV2, LSC1, LYS4, MGM101 and several oxidized proteins. The 2 nucleic acid-binding proteins ABF2 and MGM101 are protected from degradation by PIM1 when they are bound to DNA. The chain is Lon protease homolog, mitochondrial from Saccharomyces cerevisiae (strain ATCC 204508 / S288c) (Baker's yeast).